Here is a 493-residue protein sequence, read N- to C-terminus: Glutamyl-tRNA(Gln) amidotransferase subunit A (493 aa).

Residues lysine 78 and serine 159 each act as charge relay system in the active site. Catalysis depends on serine 183, which acts as the Acyl-ester intermediate.

The protein belongs to the amidase family. GatA subfamily. As to quaternary structure, heterotrimer of A, B and C subunits.

It catalyses the reaction L-glutamyl-tRNA(Gln) + L-glutamine + ATP + H2O = L-glutaminyl-tRNA(Gln) + L-glutamate + ADP + phosphate + H(+). Its function is as follows. Allows the formation of correctly charged Gln-tRNA(Gln) through the transamidation of misacylated Glu-tRNA(Gln) in organisms which lack glutaminyl-tRNA synthetase. The reaction takes place in the presence of glutamine and ATP through an activated gamma-phospho-Glu-tRNA(Gln). The protein is Glutamyl-tRNA(Gln) amidotransferase subunit A of Sphingopyxis alaskensis (strain DSM 13593 / LMG 18877 / RB2256) (Sphingomonas alaskensis).